The primary structure comprises 65 residues: Large ribosomal subunit protein bL35 (65 aa).

Basic residues predominate over residues 1 to 43; it reads MPKMKTRRGAAKRFAKTGSGKFKRRKQGLRHILTKKTAKRKSR. The tract at residues 1-49 is disordered; it reads MPKMKTRRGAAKRFAKTGSGKFKRRKQGLRHILTKKTAKRKSRLGQSAT.

This sequence belongs to the bacterial ribosomal protein bL35 family.

This chain is Large ribosomal subunit protein bL35, found in Maridesulfovibrio salexigens (strain ATCC 14822 / DSM 2638 / NCIMB 8403 / VKM B-1763) (Desulfovibrio salexigens).